Here is a 349-residue protein sequence, read N- to C-terminus: Ion-translocating oxidoreductase complex subunit D (349 aa).

A run of 3 helical transmembrane segments spans residues Cys36–Ser56, Ser77–Val99, and Ala124–Ala144. An FMN phosphoryl threonine modification is found at Thr185. 5 consecutive transmembrane segments (helical) span residues Gly212–Leu232, Trp239–Leu259, Ala265–Thr285, Ala291–Ile311, and Gly315–Ile335.

The protein belongs to the NqrB/RnfD family. As to quaternary structure, the complex is composed of six subunits: RnfA, RnfB, RnfC, RnfD, RnfE and RnfG. The cofactor is FMN.

It localises to the cell inner membrane. In terms of biological role, part of a membrane-bound complex that couples electron transfer with translocation of ions across the membrane. This Shewanella sp. (strain ANA-3) protein is Ion-translocating oxidoreductase complex subunit D.